Consider the following 230-residue polypeptide: Sodium channel modifier 1 (230 aa).

S2 is subject to Phosphoserine. The Bipartite nuclear localization signal signature appears at 4-20; the sequence is KREGDDWSQLNVLKKRR. The segment at 42–74 adopts a Matrin-type zinc-finger fold; sequence FACAICPHRPVLDTLAMLTAHRAGKKHLSSLQL. K67 is covalently cross-linked (Glycyl lysine isopeptide (Lys-Gly) (interchain with G-Cter in SUMO2)). Disordered regions lie at residues 76 to 106, 129 to 186, and 200 to 230; these read YGKK…EAPL, RRKY…SPTR, and GWIP…LPLD. Residues 81-102 are compositionally biased toward basic and acidic residues; sequence PGKERKQNPKHQNELRREETKA. Position 144 is a phosphoserine (S144). The segment covering 164 to 174 has biased composition (low complexity); sequence PAAGPQAEESA. Phosphoserine is present on S183. Positions 188 to 230 are required for interaction with LUC7L2; the sequence is RALDHYLTLRSSGWIPDGRGRWVKDENVEFDSDEEEPPDLPLD. Basic and acidic residues predominate over residues 205-214; the sequence is GRGRWVKDEN. The segment covering 215–230 has biased composition (acidic residues); that stretch reads VEFDSDEEEPPDLPLD. The residue at position 219 (S219) is a Phosphoserine.

Component of the minor spliceosome, which splices U12-type introns. Within this complex, interacts with RNF113A, as well as with SF3B1/SF3b155, SF3B2/SF3b145, SF3B3/SF3b130 and CDC5L. May interact with LUC7L2 and SNRNP70.

The protein localises to the nucleus. Its subcellular location is the nucleoplasm. The protein resides in the nucleus speckle. Functionally, as a component of the minor spliceosome, involved in the splicing of U12-type introns in pre-mRNAs. Plays a role in the regulation of primary cilia length and Hedgehog signaling. This is Sodium channel modifier 1 (SCNM1) from Homo sapiens (Human).